Reading from the N-terminus, the 477-residue chain is Small ribosomal subunit protein uS5m (477 aa).

Belongs to the universal ribosomal protein uS5 family. Component of the mitochondrial small ribosomal subunit (mt-SSU). Mature N.crassa 74S mitochondrial ribosomes consist of a small (37S) and a large (54S) subunit. The 37S small subunit contains a 16S ribosomal RNA (16S mt-rRNA) and 32 different proteins. The 54S large subunit contains a 23S rRNA (23S mt-rRNA) and 42 different proteins. uS3m, uS4m and uS5m form the narrow entry site of the mRNA channel.

Its subcellular location is the mitochondrion. Its function is as follows. Component of the mitochondrial ribosome (mitoribosome), a dedicated translation machinery responsible for the synthesis of mitochondrial genome-encoded proteins, including at least some of the essential transmembrane subunits of the mitochondrial respiratory chain. The mitoribosomes are attached to the mitochondrial inner membrane and translation products are cotranslationally integrated into the membrane. The chain is Small ribosomal subunit protein uS5m (mrps5) from Neurospora crassa (strain ATCC 24698 / 74-OR23-1A / CBS 708.71 / DSM 1257 / FGSC 987).